The chain runs to 364 residues: DNA polymerase IV (364 aa).

Residues I14–G198 enclose the UmuC domain. Mg(2+)-binding residues include D18 and D116. Residue E117 is part of the active site.

This sequence belongs to the DNA polymerase type-Y family. As to quaternary structure, monomer. The cofactor is Mg(2+).

It localises to the cytoplasm. It carries out the reaction DNA(n) + a 2'-deoxyribonucleoside 5'-triphosphate = DNA(n+1) + diphosphate. Its function is as follows. Poorly processive, error-prone DNA polymerase involved in untargeted mutagenesis. Copies undamaged DNA at stalled replication forks, which arise in vivo from mismatched or misaligned primer ends. These misaligned primers can be extended by PolIV. Exhibits no 3'-5' exonuclease (proofreading) activity. May be involved in translesional synthesis, in conjunction with the beta clamp from PolIII. This chain is DNA polymerase IV, found in Streptococcus agalactiae serotype Ia (strain ATCC 27591 / A909 / CDC SS700).